The sequence spans 276 residues: Ubiquinone biosynthesis protein coq11, mitochondrial (276 aa).

The protein belongs to the NAD(P)-dependent epimerase/dehydratase family.

It is found in the mitochondrion. Acts in the coenzyme Q biosynthetic pathway. This chain is Ubiquinone biosynthesis protein coq11, mitochondrial, found in Schizosaccharomyces pombe (strain 972 / ATCC 24843) (Fission yeast).